Here is a 399-residue protein sequence, read N- to C-terminus: MSKTISINAGSSSLKWQLYLMPEEKVLAKGLIERIGKDDAISTVKFNGQEASETLAIKDHTAAVKILLDDLIHLDIIKSYDEITGVGHRVVAGGTYFNESALVDSEEVIKKVEELALLAPLHNKANAAGIRAFKKILPDITSVVVFDTAFHTTMPEVAYRYPLPNKYFTENQVRKYGAHGTSHYYVAHEAAKILEKPIEKLKLITVHMGNGVSLTAVDGGKSVDTSMGFTPLGGVMMGTRTGDLDPAVIPYLMDNTEDFKTPEDIRRIFNNESGLLGISELSNDMREIEAATAAGNKNATLAYNMFIDRIIKHIGAYAAVMNGVDAIVFTAGIGENDAHIRSEIMKHFDWLGADIVTEKNEKRPVYGVISSNAAKVKVLVIPTDEELVIARDVERLKTK.

Residue N8 coordinates Mg(2+). K15 lines the ATP pocket. R89 is a substrate binding site. The active-site Proton donor/acceptor is D147. ATP-binding positions include 207 to 211 (HMGNG), 284 to 286 (DMR), and 332 to 336 (GIGEN). E385 is a Mg(2+) binding site.

The protein belongs to the acetokinase family. In terms of assembly, homodimer. It depends on Mg(2+) as a cofactor. Requires Mn(2+) as cofactor.

It localises to the cytoplasm. The catalysed reaction is acetate + ATP = acetyl phosphate + ADP. The protein operates within metabolic intermediate biosynthesis; acetyl-CoA biosynthesis; acetyl-CoA from acetate: step 1/2. In terms of biological role, catalyzes the formation of acetyl phosphate from acetate and ATP. Can also catalyze the reverse reaction. The sequence is that of Acetate kinase from Streptococcus mutans serotype c (strain ATCC 700610 / UA159).